Here is a 620-residue protein sequence, read N- to C-terminus: UPF0313 protein BT_0254 (620 aa).

The region spanning 311 to 591 (AYDMIKFSVN…AQRQFFFWYK (281 aa)) is the Radical SAM core domain. 3 residues coordinate [4Fe-4S] cluster: cysteine 325, cysteine 329, and cysteine 332.

Belongs to the UPF0313 family. [4Fe-4S] cluster is required as a cofactor.

This chain is UPF0313 protein BT_0254, found in Bacteroides thetaiotaomicron (strain ATCC 29148 / DSM 2079 / JCM 5827 / CCUG 10774 / NCTC 10582 / VPI-5482 / E50).